The sequence spans 326 residues: MGDARSKTDLGDCRFYEKKFPEVDDLIMVKVNRIEDMGAYVSILEYNDMEGMILMSELSKRRFRSVNKLIRVGRHEVVLVLRVDNQKGYIDLSKRRVSPKDIIKCEEHFSKSKKVHQTVRHVAQKHNMTVEELNRKVIWPLYKKYGHALDALKEATMNPDIIFKEMDISDAVKESLLSDIKLRLTPQALKLRGRIDVWCFGYEGIDAVKEALKKGKEISNNEVTINIKLIAPPQYVIVTSCHDKELGMQKIQEAMKVISDKIKEYKGGDFKQQGEILVIGGDDEKRLEELLDKHDGLSSDDEYSSDGDEDDSSNDDDNSSDEDDDD.

The region spanning 24 to 95 (DDLIMVKVNR…QKGYIDLSKR (72 aa)) is the S1 motif domain. S59 bears the Phosphoserine; by eIK1, eIK2 and PK4 mark. Positions 291–326 (LDKHDGLSSDDEYSSDGDEDDSSNDDDNSSDEDDDD) are disordered. Acidic residues predominate over residues 298-326 (SSDDEYSSDGDEDDSSNDDDNSSDEDDDD).

It belongs to the eIF-2-alpha family. In terms of processing, phosphorylates at Ser-59 in mature trophozoites, schizonts and gametocytes but not in rings and young trophozoites. Phosphorylates at Ser-59 by eIK2 in salivary gland sporozoites but not in midgut and hemocoel sporozoites. Dephosphorylated at Ser-59 by UIS2. Phosphorylation of eIF2alpha subunit of the pre-initiation complex eIF2 inhibits recycling of inactive eIF2-GDP to active eIF2-GTP by limiting the activity of the guanine nucleotide exchange factor eIF2B and thus, inhibits protein translation.

The protein resides in the cytoplasm. It localises to the stress granule. Functionally, functions in the early steps of protein synthesis by forming a ternary complex with GTP and initiator tRNA. May regulate protein translation in response to amino acid starvation. May regulate protein at various stages of parasite development. In Plasmodium berghei (strain Anka), this protein is Eukaryotic translation initiation factor 2 subunit 1.